Reading from the N-terminus, the 529-residue chain is Peptide chain release factor 3 (529 aa).

Residues 11 to 280 (AKRRTFAIIS…GLVEWAPAPM (270 aa)) form the tr-type G domain. Residues 20–27 (SHPDAGKT), 88–92 (DTPGH), and 142–145 (NKLD) contribute to the GTP site.

Belongs to the TRAFAC class translation factor GTPase superfamily. Classic translation factor GTPase family. PrfC subfamily.

Its subcellular location is the cytoplasm. Functionally, increases the formation of ribosomal termination complexes and stimulates activities of RF-1 and RF-2. It binds guanine nucleotides and has strong preference for UGA stop codons. It may interact directly with the ribosome. The stimulation of RF-1 and RF-2 is significantly reduced by GTP and GDP, but not by GMP. In Escherichia coli O8 (strain IAI1), this protein is Peptide chain release factor 3.